The chain runs to 286 residues: ATP synthase gamma chain (286 aa).

It belongs to the ATPase gamma chain family. As to quaternary structure, F-type ATPases have 2 components, CF(1) - the catalytic core - and CF(0) - the membrane proton channel. CF(1) has five subunits: alpha(3), beta(3), gamma(1), delta(1), epsilon(1). CF(0) has three main subunits: a, b and c.

Its subcellular location is the cell inner membrane. In terms of biological role, produces ATP from ADP in the presence of a proton gradient across the membrane. The gamma chain is believed to be important in regulating ATPase activity and the flow of protons through the CF(0) complex. The polypeptide is ATP synthase gamma chain (Shewanella halifaxensis (strain HAW-EB4)).